Reading from the N-terminus, the 172-residue chain is MASDEGKLFVGGLSFDTNEQALEQVFSKYGQISEVVVVKDRETQRSRGFGFVTFENIDDAKDAMMAMNGKSVDGRQIRVDQAGKSSDNRSRGYRGGSAGGRGFFRGGRSRGRGFSRGGGDRGYGGGRFESRSGGYGGSRDYYASRSQGGSYGYRSSGGSYRDSYDSYATHNE.

The RRM domain maps to 6–84 (GKLFVGGLSF…RQIRVDQAGK (79 aa)). The tract at residues 70-172 (KSVDGRQIRV…SYDSYATHNE (103 aa)) is disordered. Composition is skewed to gly residues over residues 93-105 (YRGGSAGGRGFFR) and 114-137 (FSRGGGDRGYGGGRFESRSGGYGG). Phosphoserine is present on residues serine 130, serine 138, serine 146, serine 156, serine 159, and serine 163. The span at 138–172 (SRDYYASRSQGGSYGYRSSGGSYRDSYDSYATHNE) shows a compositional bias: low complexity.

In terms of assembly, interacts with EIF4G1. Associates with ribosomes. Methylated on arginine residues. Methylation of the RGG motifs is a prerequisite for recruitment into SGs. In terms of processing, phosphorylated by CK2, GSK3A and GSK3B. Phosphorylation by GSK3B increases RNA-binding activity to the TXN 3'-UTR transcript upon exposure to UV radiation. In terms of tissue distribution, ubiquitous.

The protein localises to the nucleus. It is found in the nucleoplasm. The protein resides in the cytoplasm. Cold-inducible mRNA binding protein that plays a protective role in the genotoxic stress response by stabilizing transcripts of genes involved in cell survival. Promotes assembly of stress granules (SGs), when overexpressed. Seems to play an essential role in cold-induced suppression of cell proliferation. Acts as a translational repressor. Acts as a translational activator. Binds specifically to the 3'-untranslated regions (3'-UTRs) of stress-responsive transcripts RPA2 and TXN. The polypeptide is Cold-inducible RNA-binding protein (Cirbp) (Mus musculus (Mouse)).